A 1291-amino-acid chain; its full sequence is Cytoplasmic FMR1-interacting protein (1291 aa).

The segment at 1269–1291 is disordered; that stretch reads HPSVISSSSHYQDPQKLRQSMNN. A compositionally biased stretch (polar residues) spans 1271–1291; sequence SVISSSSHYQDPQKLRQSMNN.

Belongs to the CYFIP family. In terms of assembly, interacts with Fmr1 and Rac1. Component of the WAVE complex composed of Hem/Kette, Scar/Wave and Cyfip where it binds through its C-terminus directly to Hem.

It localises to the cytoplasm. In terms of biological role, plays a role in guidance and morphology of central and peripheral axons and in synaptic morphology. Also required for formation of cell membrane protrusions and for bristle development. The sequence is that of Cytoplasmic FMR1-interacting protein from Drosophila pseudoobscura pseudoobscura (Fruit fly).